The primary structure comprises 152 residues: Small ribosomal subunit protein uS11A (152 aa).

Residues 131–152 (EDVTPIPSDSTRRKGGRRGRRL) are disordered. Residues 143-152 (RKGGRRGRRL) are compositionally biased toward basic residues.

The protein belongs to the universal ribosomal protein uS11 family.

The protein is Small ribosomal subunit protein uS11A of Anopheles gambiae (African malaria mosquito).